We begin with the raw amino-acid sequence, 1589 residues long: Paternally-expressed gene 3 protein (1589 aa).

The region spanning 46 to 128 (HQRFRNLIYV…TLLENYKEMY (83 aa)) is the SCAN box domain. Disordered regions lie at residues 128–230 (YQPE…ESYQ), 266–306 (DGHS…RRGI), and 319–349 (KFIKDVSRSSKSGRARESSDRSQRFPRMSDD). Residues 129-142 (QPEDDNNSDVTSDD) are compositionally biased toward acidic residues. Basic and acidic residues-rich tracts occupy residues 143–152 (DMTRNRRESS), 161–182 (SGDRDWDRRGRSRDMEPRDRWS), 206–225 (FEMDRDDDRDSRAYESRSQD), and 295–306 (PEAKKSTHRRGI). 3 consecutive C2H2-type zinc fingers follow at residues 454–476 (YVCDECGRSFSVISEFVEHQIMH), 507–529 (FECKDCGETFNKSAALAEHRKIH), and 565–587 (YECRVCKETFLHSSALIEHQKIH). The segment covering 588–607 (FGDDKDNEREHERERERGET) has biased composition (basic and acidic residues). A disordered region spans residues 588 to 610 (FGDDKDNEREHERERERGETFRP). The C2H2-type 4 zinc finger occupies 627 to 649 (YECKVCGETFLHSSSLKEHQKIH). A disordered region spans residues 838 to 930 (LVASKPPRSH…EFSVPSSNVR (93 aa)). The segment covering 868 to 881 (LNDKRQKIPARENP) has biased composition (basic and acidic residues). The C2H2-type 5 zinc-finger motif lies at 969-991 (YECQECGECFAHSSDLTEHQKIH). A disordered region spans residues 1056–1104 (EKSHGEESQGENTDGEETHSEETHGQETIEDPVIQSSDMEDPQKDDPDD). The segment covering 1071-1082 (EETHSEETHGQE) has biased composition (basic and acidic residues). 5 consecutive C2H2-type zinc fingers follow at residues 1107–1129 (YECEDCGLGFVDLTDLTDHQKVH), 1163–1185 (YECPKCGESFIHSSFLFEHQRIH), 1225–1247 (IRCLLCGQGFIHSSALNEHMRLH), 1282–1304 (FECAVCGESFVNPAELADHVTVH), and 1332–1354 (YECKDCGKSFIHSTVLTKHKELH). Acidic residues predominate over residues 1396–1416 (AEPEVEAAEPEVEAAEPEVEA). The segment at 1396-1496 (AEPEVEAAEP…GIEDPEEGED (101 aa)) is disordered. A run of 7 repeats spans residues 1398 to 1404 (PEVEAAE), 1405 to 1411 (PEVEAAE), 1412 to 1418 (PEVEAAE), 1419 to 1423 (PNGEA), 1426 to 1430 (PDGEA), 1433 to 1437 (PIGEA), and 1440 to 1444 (PNGEA). The segment at 1398–1418 (PEVEAAEPEVEAAEPEVEAAE) is 3 X 7 AA repeat of P-E-V-E-A-A-E. A 4 X 5 AA repeat of P-X-G-E-A region spans residues 1419-1444 (PNGEAEGPDGEAAEPIGEAGQPNGEA). Acidic residues-rich tracts occupy residues 1450–1467 (DADEPDGAGIEDPEERAE) and 1476–1496 (PEGDADEPDGVGIEDPEEGED). 2 C2H2-type zinc fingers span residues 1506–1528 (YDCHECTETFTSSTAFGEHLKTH) and 1565–1587 (FKCDVCGQLFNDRLSLARHQNTH).

Belongs to the krueppel C2H2-type zinc-finger protein family. As to quaternary structure, homodimer. Interacts with SIAH1A and SIAH2. Interacts with TRAF2.

It localises to the nucleus. It is found in the cytoplasm. Induces apoptosis in cooperation with SIAH1A. Acts as a mediator between p53/TP53 and BAX in a neuronal death pathway that is activated by DNA damage. Acts synergistically with TRAF2 and inhibits TNF induced apoptosis through activation of NF-kappa-B. The polypeptide is Paternally-expressed gene 3 protein (PEG3) (Gorilla gorilla gorilla (Western lowland gorilla)).